Here is a 234-residue protein sequence, read N- to C-terminus: Leucyl/phenylalanyl-tRNA--protein transferase (234 aa).

Belongs to the L/F-transferase family.

The protein resides in the cytoplasm. It carries out the reaction N-terminal L-lysyl-[protein] + L-leucyl-tRNA(Leu) = N-terminal L-leucyl-L-lysyl-[protein] + tRNA(Leu) + H(+). It catalyses the reaction N-terminal L-arginyl-[protein] + L-leucyl-tRNA(Leu) = N-terminal L-leucyl-L-arginyl-[protein] + tRNA(Leu) + H(+). The catalysed reaction is L-phenylalanyl-tRNA(Phe) + an N-terminal L-alpha-aminoacyl-[protein] = an N-terminal L-phenylalanyl-L-alpha-aminoacyl-[protein] + tRNA(Phe). Functions in the N-end rule pathway of protein degradation where it conjugates Leu, Phe and, less efficiently, Met from aminoacyl-tRNAs to the N-termini of proteins containing an N-terminal arginine or lysine. This is Leucyl/phenylalanyl-tRNA--protein transferase from Pseudoalteromonas atlantica (strain T6c / ATCC BAA-1087).